The primary structure comprises 404 residues: Phosphopentomutase (404 aa).

Aspartate 10, aspartate 297, histidine 302, aspartate 338, histidine 339, and histidine 350 together coordinate Mn(2+).

This sequence belongs to the phosphopentomutase family. Requires Mn(2+) as cofactor.

The protein resides in the cytoplasm. The catalysed reaction is 2-deoxy-alpha-D-ribose 1-phosphate = 2-deoxy-D-ribose 5-phosphate. The enzyme catalyses alpha-D-ribose 1-phosphate = D-ribose 5-phosphate. It participates in carbohydrate degradation; 2-deoxy-D-ribose 1-phosphate degradation; D-glyceraldehyde 3-phosphate and acetaldehyde from 2-deoxy-alpha-D-ribose 1-phosphate: step 1/2. Its function is as follows. Isomerase that catalyzes the conversion of deoxy-ribose 1-phosphate (dRib-1-P) and ribose 1-phosphate (Rib-1-P) to deoxy-ribose 5-phosphate (dRib-5-P) and ribose 5-phosphate (Rib-5-P), respectively. This chain is Phosphopentomutase, found in Colwellia psychrerythraea (strain 34H / ATCC BAA-681) (Vibrio psychroerythus).